A 114-amino-acid polypeptide reads, in one-letter code: Pancreatic progenitor cell differentiation and proliferation factor (114 aa).

The residue at position 9 (serine 9) is a Phosphoserine. Disordered regions lie at residues 22 to 47 and 75 to 114; these read GSTS…PGLP and AEHS…GPPS. Positions 23-33 are enriched in low complexity; that stretch reads STSSNSSCSST. Residues 102-114 show a composition bias toward polar residues; that stretch reads GGQSSTASAGPPS.

It belongs to the PPDPF family.

In terms of biological role, probable regulator of exocrine pancreas development. This is Pancreatic progenitor cell differentiation and proliferation factor (PPDPF) from Homo sapiens (Human).